Here is a 168-residue protein sequence, read N- to C-terminus: Ribosome maturation factor RimM (168 aa).

The PRC barrel domain maps to 95–168 (KEGYYWSDLI…QIMVDWELDY (74 aa)).

Belongs to the RimM family. Binds ribosomal protein uS19.

It localises to the cytoplasm. Functionally, an accessory protein needed during the final step in the assembly of 30S ribosomal subunit, possibly for assembly of the head region. Essential for efficient processing of 16S rRNA. May be needed both before and after RbfA during the maturation of 16S rRNA. It has affinity for free ribosomal 30S subunits but not for 70S ribosomes. The protein is Ribosome maturation factor RimM of Nitrosomonas eutropha (strain DSM 101675 / C91 / Nm57).